A 552-amino-acid polypeptide reads, in one-letter code: Tyrosine-protein kinase Src64B (552 aa).

The SH3 domain maps to 95–156; the sequence is VLKRVVVALY…PLNFVAEERS (62 aa). Residues 162 to 259 enclose the SH2 domain; sequence WFFENVLRKE…GLCHILSRPC (98 aa). The Protein kinase domain maps to 284–537; the sequence is IQLLRKLGRG…TFEFLNHYFE (254 aa). ATP contacts are provided by residues 290–298 and Lys312; that span reads LGRGNFGEV. Residue Asp404 is the Proton acceptor of the active site. Phosphotyrosine; by autocatalysis is present on Tyr434.

This sequence belongs to the protein kinase superfamily. Tyr protein kinase family. SRC subfamily. As to quaternary structure, interacts with hzg. Post-translationally, phosphorylated. After the first 8 hours of development, accumulates almost exclusively in neural tissues such as the brain, ventral nerve chord, and eye-antennal disks, and in differentiating smooth muscle.

It carries out the reaction L-tyrosyl-[protein] + ATP = O-phospho-L-tyrosyl-[protein] + ADP + H(+). In terms of biological role, tyrosine-protein kinase that may play a role in the development of neural tissue and smooth muscle. May contribute to tyrosine phosphorylation of Dscam1, a cell surface receptor involved in targeting of growing axons during eye morphogenesis. This is Tyrosine-protein kinase Src64B (Src64B) from Drosophila melanogaster (Fruit fly).